The following is a 379-amino-acid chain: Cytochrome b (379 aa).

Transmembrane regions (helical) follow at residues 33 to 53 (FGSL…FLAM), 77 to 98 (WLIR…FIHV), 113 to 133 (WNIG…GYVL), and 178 to 198 (FFAF…VHLL). The heme b site is built by histidine 83 and histidine 97. The heme b site is built by histidine 182 and histidine 196. Position 201 (histidine 201) interacts with a ubiquinone. The next 4 membrane-spanning stretches (helical) occupy residues 226–246 (TKDL…ALFF), 288–308 (LGGV…PLLN), 320–340 (VTQV…WIGG), and 347–367 (FTTI…ILIP).

It belongs to the cytochrome b family. In terms of assembly, the cytochrome bc1 complex contains 11 subunits: 3 respiratory subunits (MT-CYB, CYC1 and UQCRFS1), 2 core proteins (UQCRC1 and UQCRC2) and 6 low-molecular weight proteins (UQCRH/QCR6, UQCRB/QCR7, UQCRQ/QCR8, UQCR10/QCR9, UQCR11/QCR10 and a cleavage product of UQCRFS1). This cytochrome bc1 complex then forms a dimer. The cofactor is heme b.

The protein localises to the mitochondrion inner membrane. In terms of biological role, component of the ubiquinol-cytochrome c reductase complex (complex III or cytochrome b-c1 complex) that is part of the mitochondrial respiratory chain. The b-c1 complex mediates electron transfer from ubiquinol to cytochrome c. Contributes to the generation of a proton gradient across the mitochondrial membrane that is then used for ATP synthesis. In Akodon mystax (Caparao grass mouse), this protein is Cytochrome b (MT-CYB).